Consider the following 1051-residue polypeptide: Transcription intermediary factor 1-alpha (1051 aa).

Residues 1-42 form a disordered region; the sequence is MEVAVEKAAAAAAPAGGPAAAAPSGENEAESRQGPDSESGGE. Residue Lys-7 forms a Glycyl lysine isopeptide (Lys-Gly) (interchain with G-Cter in SUMO2) linkage. The segment covering 8–23 has biased composition (low complexity); that stretch reads AAAAAAPAGGPAAAAP. An RING-type zinc finger spans residues 52–77; sequence CAVCHQNIQSRVPKLLPCLHSFCQRC. The interval 94 to 115 is disordered; sequence SAETPPPAPAPAPAPGSPAGGP. Position 97 is a phosphothreonine (Thr-97). The span at 97-109 shows a compositional bias: pro residues; it reads TPPPAPAPAPAPG. Residue Ser-110 is modified to Phosphoserine. 2 B box-type zinc fingers span residues 158–211 and 218–259; these read KSNQ…VSPE and QRPV…YQFI. Residues Cys-163, Cys-166, Cys-187, and His-200 each coordinate Zn(2+). Lys-205 participates in a covalent cross-link: Glycyl lysine isopeptide (Lys-Gly) (interchain with G-Cter in SUMO2). Residues Cys-223, His-226, Cys-246, and His-251 each contribute to the Zn(2+) site. A Glycyl lysine isopeptide (Lys-Gly) (interchain with G-Cter in SUMO2) cross-link involves residue Lys-276. The stretch at 289 to 359 forms a coiled coil; it reads NQIQNRIIEI…AGLSKQLEHV (71 aa). The tract at residues 429-457 is disordered; it reads ESQPQMPKQNPVVEQSSQPPGGLPSNQLS. Over residues 431-457 the composition is skewed to polar residues; sequence QPQMPKQNPVVEQSSQPPGGLPSNQLS. Residues Lys-436 and Lys-458 each participate in a glycyl lysine isopeptide (Lys-Gly) (interchain with G-Cter in SUMO2) cross-link. At Arg-469 the chain carries Omega-N-methylarginine. 2 stretches are compositionally biased toward low complexity: residues 479–490 and 501–510; these read AQRQQVQRRPAP and PIQQPSISHQ. Residues 479–551 are disordered; the sequence is AQRQQVQRRP…PSQNVPRQTT (73 aa). A compositionally biased stretch (pro residues) spans 526–535; that stretch reads PNGPVLPPYP. The span at 538 to 551 shows a compositional bias: polar residues; the sequence is LRYSPSQNVPRQTT. Glycyl lysine isopeptide (Lys-Gly) (interchain with G-Cter in SUMO2) cross-links involve residues Lys-553 and Lys-642. The segment at 644–713 is disordered; sequence TGVDHAQPRP…PAGADSTHKV (70 aa). Residues Ser-655, Ser-661, and Ser-668 each carry the phosphoserine modification. The span at 655–667 shows a compositional bias: polar residues; sequence SNRTVQSPNSSVP. Residues 686 to 708 are compositionally biased toward low complexity; the sequence is SPSASSVGSRGSSGSSSKPAGAD. Glycyl lysine isopeptide (Lys-Gly) (interchain with G-Cter in SUMO2) cross-links involve residues Lys-703 and Lys-712. Residues Lys-724 and Lys-742 each participate in a glycyl lysine isopeptide (Lys-Gly) (interchain with G-Cter in SUMO); alternate cross-link. Lys-724 is covalently cross-linked (Glycyl lysine isopeptide (Lys-Gly) (interchain with G-Cter in SUMO1); alternate). Glycyl lysine isopeptide (Lys-Gly) (interchain with G-Cter in SUMO2); alternate cross-links involve residues Lys-724 and Lys-742. Ser-745 and Ser-769 each carry phosphoserine. The segment at 755–780 is nuclear receptor binding site (NRBS); that stretch reads NYPRSILTSLLLNSSQSSASEETVLR. Positions 771 to 827 are disordered; sequence SSASEETVLRSDAPDSTGDQPGLHQENSSNGKSEWSDASQKSPVHVGETRKEDDPNE. Polar residues predominate over residues 795–812; that stretch reads QENSSNGKSEWSDASQKS. Residue Lys-802 forms a Glycyl lysine isopeptide (Lys-Gly) (interchain with G-Cter in SUMO2) linkage. Position 809 is a phosphoserine (Ser-809). Lys-811 is covalently cross-linked (Glycyl lysine isopeptide (Lys-Gly) (interchain with G-Cter in SUMO2)). The residue at position 812 (Ser-812) is a Phosphoserine. The residue at position 819 (Thr-819) is a Phosphothreonine. The PHD-type zinc-finger motif lies at 827–874; that stretch reads EDWCAVCQNGGELLCCEKCPKVFHLTCHVPTLTNFPSGEWICTFCRDL. The segment at 835 to 841 is interaction with histone H3 that is not methylated at 'Lys-4' (H3K4me0); it reads NGGELLC. A Glycyl lysine isopeptide (Lys-Gly) (interchain with G-Cter in SUMO2) cross-link involves residue Lys-876. A Nuclear localization signal motif is present at residues 892-908; the sequence is KRKSEGLTKLTPIDKRK. One can recognise a Bromo domain in the interval 900-1005; sequence KLTPIDKRKC…SYFEELLKNL (106 aa). Glycyl lysine isopeptide (Lys-Gly) (interchain with G-Cter in SUMO2) cross-links involve residues Lys-950 and Lys-993. The tract at residues 1024–1051 is disordered; the sequence is KFSDDSDDDFVQPRKKRLKSTEDRQLLK. Ser-1026 and Ser-1029 each carry phosphoserine. Residue Lys-1042 forms a Glycyl lysine isopeptide (Lys-Gly) (interchain with G-Cter in SUMO2) linkage. Over residues 1042-1051 the composition is skewed to basic and acidic residues; the sequence is KSTEDRQLLK. The residue at position 1043 (Ser-1043) is a Phosphoserine.

As to quaternary structure, interacts (via bromo domain) with histone H3 (via N-terminus), provided that it is not methylated at 'Lys-4' (H3K4me0). Does not interact with histone H3 that is methylated at 'Lys-4' (H3K4me1, H3K4me2 or H3K4me3). Interacts (via bromo domain) with histone H3 (via N-terminus) that is acetylated at 'Lys-23' (H3K23ac). Has the highest affinity for histone H3 that is both unmodified at 'Lys-4' (H3K4me0) and acetylated at 'Lys-23' (H3K23ac). Has very low affinity for histone H3 that is methylated at 'Lys-9' (H3K9me), or acetylated at both 'Lys-9' (H3K9ac) and 'Lys-14' (H3K14ac), or acetylated at 'Lys-27' (H3K27ac) (in vitro). Interacts with TRIM16. Interacts with NR3C2/MCR. Interacts with the ligand-binding domain of estrogen receptors (in vitro). Interaction with DNA-bound estrogen receptors requires the presence of estradiol. Interacts with AR, CARM1, KAT5/TIP60, NCOA2/GRIP1, BRD7, CBX1, CBX3 and CBX5. Part of a coactivator complex containing TRIM24, NCOA2/GRIP1 and CARM1. Interacts with p53/TP53 and PML. Post-translationally, sumoylated. In terms of processing, phosphorylated at Ser-768 by ATM kinase induces ubiquitination and degradation during DNA damage. Undergoes ubiquitination-mediated degradation in response to DNA damage. As to expression, detected in embryonic and adult liver. Detected in zygote and throughout embryogenesis (at protein level). Detected in all adult tissues, with the highest expression level in testis.

It is found in the nucleus. The protein resides in the cytoplasm. It carries out the reaction S-ubiquitinyl-[E2 ubiquitin-conjugating enzyme]-L-cysteine + [acceptor protein]-L-lysine = [E2 ubiquitin-conjugating enzyme]-L-cysteine + N(6)-ubiquitinyl-[acceptor protein]-L-lysine.. It functions in the pathway protein modification; protein ubiquitination. Transcriptional coactivator that interacts with numerous nuclear receptors and coactivators and modulates the transcription of target genes. Interacts with chromatin depending on histone H3 modifications, having the highest affinity for histone H3 that is both unmodified at 'Lys-4' (H3K4me0) and acetylated at 'Lys-23' (H3K23ac). Has E3 protein-ubiquitin ligase activity. Promotes ubiquitination and proteasomal degradation of p53/TP53. Plays a role in the regulation of cell proliferation and apoptosis via its effects on p53/TP53 levels. Up-regulates ligand-dependent transcription activation by AR, GCR/NR3C1, thyroid hormone receptor (TR) and ESR1. Modulates transcription activation by retinoic acid (RA) receptors, such as RARA. Plays a role in regulating retinoic acid-dependent proliferation of hepatocytes. Required for normal transition from proliferating neonatal hepatocytes to quiescent adult hepatocytes. Its function is as follows. Transcriptional coactivator that interacts with numerous nuclear receptors and coactivators and modulates the transcription of target genes. Interacts with chromatin depending on histone H3 modifications, having the highest affinity for histone H3 that is both unmodified at 'Lys-4' (H3K4me0) and acetylated at 'Lys-23' (H3K23ac). Has E3 protein-ubiquitin ligase activity. During the DNA damage response, participates in an autoregulatory feedback loop with TP53. Early in response to DNA damage, ATM kinase phosphorylates TRIM24 leading to its ubiquitination and degradation. After sufficient DNA repair has occurred, TP53 activates TRIM24 transcription, ultimately leading to TRIM24-mediated TP53 ubiquitination and degradation. Plays a role in the regulation of cell proliferation and apoptosis, at least in part via its effects on p53/TP53 levels. Up-regulates ligand-dependent transcription activation by AR, GCR/NR3C1, thyroid hormone receptor (TR) and ESR1. Modulates transcription activation by retinoic acid (RA) receptors, including RARA. Plays a role in regulating retinoic acid-dependent proliferation of hepatocytes. Also participates in innate immunity by mediating the specific 'Lys-63'-linked ubiquitination of TRAF3 leading to activation of downstream signal transduction of the type I IFN pathway. Additionally, negatively regulates NLRP3/CASP1/IL-1beta-mediated pyroptosis and cell migration probably by ubiquitinating NLRP3. The protein is Transcription intermediary factor 1-alpha (Trim24) of Mus musculus (Mouse).